The chain runs to 262 residues: Polyamine aminopropyltransferase (262 aa).

The PABS domain occupies 1–249 (MWITQEITPY…DIHRAAFALP (249 aa)). N29 lines the S-methyl-5'-thioadenosine pocket. D83 provides a ligand contact to spermidine. Residue D155 is the Proton acceptor of the active site.

Belongs to the spermidine/spermine synthase family. In terms of assembly, homodimer or homotetramer.

The protein localises to the cytoplasm. It carries out the reaction S-adenosyl 3-(methylsulfanyl)propylamine + putrescine = S-methyl-5'-thioadenosine + spermidine + H(+). The protein operates within amine and polyamine biosynthesis; spermidine biosynthesis; spermidine from putrescine: step 1/1. Functionally, catalyzes the irreversible transfer of a propylamine group from the amino donor S-adenosylmethioninamine (decarboxy-AdoMet) to putrescine (1,4-diaminobutane) to yield spermidine. The polypeptide is Polyamine aminopropyltransferase (Helicobacter pylori (strain HPAG1)).